The sequence spans 188 residues: dCTP deaminase (188 aa).

DCTP is bound by residues Lys111 to Arg116, Thr135 to Glu137, Gln156, Tyr170, and Gln180. The active-site Proton donor/acceptor is the Glu137.

It belongs to the dCTP deaminase family. Homotrimer.

The enzyme catalyses dCTP + H2O + H(+) = dUTP + NH4(+). It functions in the pathway pyrimidine metabolism; dUMP biosynthesis; dUMP from dCTP (dUTP route): step 1/2. In terms of biological role, catalyzes the deamination of dCTP to dUTP. The polypeptide is dCTP deaminase (Cupriavidus necator (strain ATCC 17699 / DSM 428 / KCTC 22496 / NCIMB 10442 / H16 / Stanier 337) (Ralstonia eutropha)).